Consider the following 466-residue polypeptide: Communesin N16 acyltransferase cnsK (466 aa).

The protein belongs to the fumigaclavine B O-acetyltransferase family.

It functions in the pathway alkaloid biosynthesis. In terms of biological role, communesin N16 acyltransferase; part of the gene cluster that mediates the biosynthesis of communesins, a prominent class of indole alkaloids with great potential as pharmaceuticals. Communesins are biosynthesized by the coupling of tryptamine and aurantioclavine, two building blocks derived from L-tryptophan. The L-tryptophan decarboxylase cnsB converts L-tryptophan to tryptamine, whereas the tryptophan dimethylallyltransferase cnsF converts L-tryptophan to 4-dimethylallyl tryptophan which is further transformed to aurantioclavine by the aurantioclavine synthase cnsA, probably aided by the catalase cnsD. The cytochrome P450 monooxygenase cnsC catalyzes the heterodimeric coupling between the two different indole moieties, tryptamine and aurantioclavine, to construct vicinal quaternary stereocenters and yield the heptacyclic communesin scaffold. The O-methyltransferase cnsE then methylates the communesin scaffold to produce communesin K, the simplest characterized communesin that contains the heptacyclic core. The dioxygenase cnsJ converts communesin K into communesin I. Acylation to introduce the hexadienyl group at position N16 of communesin I by the acyltransferase cnsK leads to the production of communesin B. The hexadienyl group is produced by the highly reducing polyketide synthase cnsI, before being hydrolytically removed from cnsI by the serine hydrolase cnsH, converted into hexadienyl-CoA by the CoA ligase cnsG, and then transferred to communesin I by cnsK. Surprisingly, cnsK may also be a promiscuous acyltransferase that can tolerate a range of acyl groups, including acetyl-, propionyl-, and butyryl-CoA, which lead to communesins A, G and H respectively. The roles of the alpha-ketoglutarate-dependent dioxygenases cnsM and cnsP have still to be determined. This is Communesin N16 acyltransferase cnsK from Penicillium expansum (Blue mold rot fungus).